We begin with the raw amino-acid sequence, 412 residues long: Multifunctional CCA protein (412 aa).

The ATP site is built by Gly8 and Arg11. CTP is bound by residues Gly8 and Arg11. Mg(2+) contacts are provided by Asp21 and Asp23. 3 residues coordinate ATP: Arg91, Arg137, and Arg140. CTP contacts are provided by Arg91, Arg137, and Arg140. The HD domain maps to 228–329; that stretch reads TGIHTLMTLS…VKLFDSIDAW (102 aa).

This sequence belongs to the tRNA nucleotidyltransferase/poly(A) polymerase family. Bacterial CCA-adding enzyme type 1 subfamily. As to quaternary structure, monomer. Can also form homodimers and oligomers. Requires Mg(2+) as cofactor. Ni(2+) serves as cofactor.

It carries out the reaction a tRNA precursor + 2 CTP + ATP = a tRNA with a 3' CCA end + 3 diphosphate. The enzyme catalyses a tRNA with a 3' CCA end + 2 CTP + ATP = a tRNA with a 3' CCACCA end + 3 diphosphate. Catalyzes the addition and repair of the essential 3'-terminal CCA sequence in tRNAs without using a nucleic acid template. Adds these three nucleotides in the order of C, C, and A to the tRNA nucleotide-73, using CTP and ATP as substrates and producing inorganic pyrophosphate. tRNA 3'-terminal CCA addition is required both for tRNA processing and repair. Also involved in tRNA surveillance by mediating tandem CCA addition to generate a CCACCA at the 3' terminus of unstable tRNAs. While stable tRNAs receive only 3'-terminal CCA, unstable tRNAs are marked with CCACCA and rapidly degraded. In Shigella flexneri, this protein is Multifunctional CCA protein.